The primary structure comprises 577 residues: Aspartate--tRNA(Asp/Asn) ligase (577 aa).

Glu171 contributes to the L-aspartate binding site. The tract at residues 195-198 (QLFK) is aspartate. Arg217 lines the L-aspartate pocket. Residues 217 to 219 (RDE) and Gln226 contribute to the ATP site. His444 serves as a coordination point for L-aspartate. Glu474 contributes to the ATP binding site. An L-aspartate-binding site is contributed by Arg481. 526 to 529 (GFDR) is an ATP binding site.

It belongs to the class-II aminoacyl-tRNA synthetase family. Type 1 subfamily. As to quaternary structure, homodimer.

The protein localises to the cytoplasm. It catalyses the reaction tRNA(Asx) + L-aspartate + ATP = L-aspartyl-tRNA(Asx) + AMP + diphosphate. Functionally, aspartyl-tRNA synthetase with relaxed tRNA specificity since it is able to aspartylate not only its cognate tRNA(Asp) but also tRNA(Asn). Reaction proceeds in two steps: L-aspartate is first activated by ATP to form Asp-AMP and then transferred to the acceptor end of tRNA(Asp/Asn). This Helicobacter pylori (strain G27) protein is Aspartate--tRNA(Asp/Asn) ligase.